Here is a 397-residue protein sequence, read N- to C-terminus: Xylose isomerase (397 aa).

Residues His-54 and Asp-57 contribute to the active site. Mg(2+)-binding residues include Glu-181, Glu-217, His-220, Asp-245, Asp-255, Asp-257, and Asp-293.

It belongs to the xylose isomerase family. In terms of assembly, homotetramer. Mg(2+) is required as a cofactor.

The protein localises to the cytoplasm. The catalysed reaction is alpha-D-xylose = alpha-D-xylulofuranose. The chain is Xylose isomerase from Clavibacter michiganensis subsp. michiganensis (strain NCPPB 382).